Consider the following 316-residue polypeptide: Transaldolase (316 aa).

Lys-132 acts as the Schiff-base intermediate with substrate in catalysis.

This sequence belongs to the transaldolase family. Type 1 subfamily. Homodimer.

The protein resides in the cytoplasm. It catalyses the reaction D-sedoheptulose 7-phosphate + D-glyceraldehyde 3-phosphate = D-erythrose 4-phosphate + beta-D-fructose 6-phosphate. Its pathway is carbohydrate degradation; pentose phosphate pathway; D-glyceraldehyde 3-phosphate and beta-D-fructose 6-phosphate from D-ribose 5-phosphate and D-xylulose 5-phosphate (non-oxidative stage): step 2/3. Functionally, transaldolase is important for the balance of metabolites in the pentose-phosphate pathway. The polypeptide is Transaldolase (Marinomonas sp. (strain MWYL1)).